We begin with the raw amino-acid sequence, 350 residues long: Protein-glutamate methylesterase/protein-glutamine glutaminase 6 (350 aa).

One can recognise a Response regulatory domain in the interval R11–E126. Residue D62 is modified to 4-aspartylphosphate. In terms of domain architecture, CheB-type methylesterase spans E150–A347. Active-site residues include S162, H189, and D289.

It belongs to the CheB family. In terms of processing, phosphorylated by CheA. Phosphorylation of the N-terminal regulatory domain activates the methylesterase activity.

It localises to the cytoplasm. The enzyme catalyses [protein]-L-glutamate 5-O-methyl ester + H2O = L-glutamyl-[protein] + methanol + H(+). The catalysed reaction is L-glutaminyl-[protein] + H2O = L-glutamyl-[protein] + NH4(+). Involved in chemotaxis. Part of a chemotaxis signal transduction system that modulates chemotaxis in response to various stimuli. Catalyzes the demethylation of specific methylglutamate residues introduced into the chemoreceptors (methyl-accepting chemotaxis proteins or MCP) by CheR. Also mediates the irreversible deamidation of specific glutamine residues to glutamic acid. The sequence is that of Protein-glutamate methylesterase/protein-glutamine glutaminase 6 from Anaeromyxobacter dehalogenans (strain 2CP-C).